Consider the following 152-residue polypeptide: Large ribosomal subunit protein bL9 (152 aa).

It belongs to the bacterial ribosomal protein bL9 family.

Its function is as follows. Binds to the 23S rRNA. In Mycobacterium sp. (strain JLS), this protein is Large ribosomal subunit protein bL9.